A 1015-amino-acid chain; its full sequence is Tolloid-like protein 2 (1015 aa).

The signal sequence occupies residues 1-25; the sequence is MPRATALGALVSLLLLLPLPRGAGG. Disordered stretches follow at residues 24-49 and 88-130; these read GGLG…EQQL and VGAT…TTLL. Residues 26-149 constitute a propeptide that is removed on maturation; it reads LGERPDATAD…AKTFSPRVRR (124 aa). Positions 103–113 are enriched in polar residues; it reads SESSPDTTAMD. The span at 115–125 shows a compositional bias: basic and acidic residues; the sequence is GTKEAGKDGRE. The region spanning 149 to 349 is the Peptidase M12A domain; the sequence is RATTSRTERI…AQARKLYKCP (201 aa). N-linked (GlcNAc...) asparagine glycosylation occurs at Asn171. 4 disulfide bridges follow: Cys192-Cys348, Cys212-Cys234, Cys214-Cys215, and Cys351-Cys377. His242 provides a ligand contact to Zn(2+). Glu243 is a catalytic residue. 2 residues coordinate Zn(2+): His246 and His252. CUB domains lie at 351–463 and 464–576; these read CGET…YEAT and CGGD…FFKE. Asn361 and Asn392 each carry an N-linked (GlcNAc...) asparagine glycan. 12 disulfides stabilise this stretch: Cys404/Cys426, Cys464/Cys490, Cys517/Cys539, Cys580/Cys592, Cys588/Cys601, Cys603/Cys616, Cys620/Cys646, Cys673/Cys695, Cys736/Cys747, Cys743/Cys756, Cys758/Cys771, and Cys776/Cys802. Positions 576-617 constitute an EGF-like 1; calcium-binding domain; sequence EVDECSWPDHGGCEHRCVNTLGSYKCACDPGYELAADKKMCE. Positions 620-732 constitute a CUB 3 domain; the sequence is CGGFITKLNG…RGFRAHFFSD (113 aa). N-linked (GlcNAc...) asparagine glycosylation is present at Asn628. The EGF-like 2; calcium-binding domain occupies 732 to 772; sequence DKDECAKDNGGCQHECVNTFGSYLCRCRNGYWLHENGHDCK. CUB domains follow at residues 776–888 and 889–1005; these read CAHK…HSTE and CGGR…YTST. Asn805 carries N-linked (GlcNAc...) asparagine glycosylation. 3 disulfides stabilise this stretch: Cys829-Cys851, Cys889-Cys919, and Cys946-Cys968. Arg963 and Arg966 each carry omega-N-methylarginine.

Requires Zn(2+) as cofactor.

The protein resides in the secreted. Protease which specifically processes pro-lysyl oxidase. Required for the embryonic development. Predominant protease, which in the development, influences dorsal-ventral patterning and skeletogenesis. The sequence is that of Tolloid-like protein 2 (TLL2) from Homo sapiens (Human).